Here is a 124-residue protein sequence, read N- to C-terminus: uncharacterized protein (124 aa).

Its subcellular location is the cytoplasm. The protein localises to the nucleus. This is an uncharacterized protein from Schizosaccharomyces pombe (strain 972 / ATCC 24843) (Fission yeast).